The following is a 1749-amino-acid chain: Transposon Ty1-NL2 Gag-Pol polyprotein (1749 aa).

4 stretches are compositionally biased toward polar residues: residues 1-23, 48-60, 71-97, and 129-152; these read MESQ…SVTS, TKAN…TPAS, SPQT…NQAN, and QFPQ…GNTF. Disordered regions lie at residues 1-97, 129-171, and 352-421; these read MESQ…NQAN, QFPQ…YVRP, and GSRN…SKST. Positions 153–165 are enriched in low complexity; the sequence is TDSSSADSDMTST. The tract at residues 299 to 401 is RNA-binding; sequence NNGIHINNKV…NSKSKTARAH (103 aa). The span at 402 to 418 shows a compositional bias: low complexity; the sequence is NVSTSNNSPSTDNDSIS. The active-site For protease activity; shared with dimeric partner is the aspartate 461. The integrase-type zinc finger-like stretch occupies residues 583-640; sequence NVHTSESTRKYPYPFIHRMLAHANAQTIRYSLKNNTITYFNESDVDWSSAIDYQCPDC. The Integrase catalytic domain maps to 660-835; the sequence is NSYEPFQYLH…AGLDISTLLP (176 aa). Mg(2+) is bound by residues aspartate 671 and aspartate 736. Residues 945-1166 are disordered; it reads PRNVLSKAVS…LGGIGDSNAY (222 aa). Residues 954 to 963 are compositionally biased toward low complexity; sequence SPTDSTPPST. The segment covering 999 to 1009 has biased composition (polar residues); that stretch reads STPQISDIEST. Residues 1032-1047 show a composition bias toward basic and acidic residues; sequence ESSHTSKSKDFRHSDS. Polar residues-rich tracts occupy residues 1048–1076 and 1089–1100; these read YSDN…QTSE and SIDTSSSESNSL. The short motif at 1172–1206 is the Bipartite nuclear localization signal element; sequence KKRSLEDNETEIKVSRDTWNTKNMRSLEPPRSKKR. The Reverse transcriptase Ty1/copia-type domain occupies 1332 to 1470; sequence NNYYITQLDI…DILGLEIKYQ (139 aa). The Mg(2+) site is built by aspartate 1340, aspartate 1421, aspartate 1422, aspartate 1604, glutamate 1646, and aspartate 1679. In terms of domain architecture, RNase H Ty1/copia-type spans 1604 to 1746; that stretch reads DASYGNQPYY…IKTFKLLTNK (143 aa).

As to quaternary structure, the capsid protein forms a homotrimer, from which the VLPs are assembled. The protease is a homodimer, whose active site consists of two apposed aspartic acid residues. In terms of processing, initially, virus-like particles (VLPs) are composed of the structural unprocessed proteins Gag and Gag-Pol, and also contain the host initiator methionine tRNA (tRNA(i)-Met) which serves as a primer for minus-strand DNA synthesis, and a dimer of genomic Ty RNA. Processing of the polyproteins occurs within the particle and proceeds by an ordered pathway, called maturation. First, the protease (PR) is released by autocatalytic cleavage of the Gag-Pol polyprotein yielding capsid protein p45 and a Pol-p154 precursor protein. This cleavage is a prerequisite for subsequent processing of Pol-p154 at the remaining sites to release the mature structural and catalytic proteins. Maturation takes place prior to the RT reaction and is required to produce transposition-competent VLPs.

The protein localises to the cytoplasm. The protein resides in the nucleus. The catalysed reaction is DNA(n) + a 2'-deoxyribonucleoside 5'-triphosphate = DNA(n+1) + diphosphate. It catalyses the reaction Endonucleolytic cleavage to 5'-phosphomonoester.. Its function is as follows. Capsid protein (CA) is the structural component of the virus-like particle (VLP), forming the shell that encapsulates the retrotransposons dimeric RNA genome. The particles are assembled from trimer-clustered units and there are holes in the capsid shells that allow for the diffusion of macromolecules. CA also has nucleocapsid-like chaperone activity, promoting primer tRNA(i)-Met annealing to the multipartite primer-binding site (PBS), dimerization of Ty1 RNA and initiation of reverse transcription. The aspartyl protease (PR) mediates the proteolytic cleavages of the Gag and Gag-Pol polyproteins after assembly of the VLP. In terms of biological role, reverse transcriptase/ribonuclease H (RT) is a multifunctional enzyme that catalyzes the conversion of the retro-elements RNA genome into dsDNA within the VLP. The enzyme displays a DNA polymerase activity that can copy either DNA or RNA templates, and a ribonuclease H (RNase H) activity that cleaves the RNA strand of RNA-DNA heteroduplexes during plus-strand synthesis and hydrolyzes RNA primers. The conversion leads to a linear dsDNA copy of the retrotransposon that includes long terminal repeats (LTRs) at both ends. Functionally, integrase (IN) targets the VLP to the nucleus, where a subparticle preintegration complex (PIC) containing at least integrase and the newly synthesized dsDNA copy of the retrotransposon must transit the nuclear membrane. Once in the nucleus, integrase performs the integration of the dsDNA into the host genome. The polypeptide is Transposon Ty1-NL2 Gag-Pol polyprotein (TY1B-NL2) (Saccharomyces cerevisiae (strain ATCC 204508 / S288c) (Baker's yeast)).